Consider the following 135-residue polypeptide: Basic phospholipase A2 10 (135 aa).

7 disulfides stabilise this stretch: cysteine 28–cysteine 87, cysteine 42–cysteine 134, cysteine 44–cysteine 60, cysteine 59–cysteine 115, cysteine 66–cysteine 108, cysteine 76–cysteine 101, and cysteine 94–cysteine 106. Ca(2+) is bound by residues tyrosine 43, glycine 45, and glycine 47. Histidine 63 is a catalytic residue. Aspartate 64 is a Ca(2+) binding site. Aspartate 109 is an active-site residue.

This sequence belongs to the phospholipase A2 family. Group I subfamily. D49 sub-subfamily. Requires Ca(2+) as cofactor. In terms of tissue distribution, expressed by the venom gland.

Its subcellular location is the secreted. The enzyme catalyses a 1,2-diacyl-sn-glycero-3-phosphocholine + H2O = a 1-acyl-sn-glycero-3-phosphocholine + a fatty acid + H(+). In terms of biological role, snake venom phospholipase A2 (PLA2) that inhibits neuromuscular transmission by blocking acetylcholine release from the nerve termini. PLA2 catalyzes the calcium-dependent hydrolysis of the 2-acyl groups in 3-sn-phosphoglycerides. The chain is Basic phospholipase A2 10 from Bungarus fasciatus (Banded krait).